The sequence spans 439 residues: Protein ABHD8 (439 aa).

Disordered regions lie at residues 54–75 (HAGPAPIPTPPPPPPEDDPGVK) and 122–148 (ELAEPAGGDTRANPGSGRRRRPRRPKR). Pro residues predominate over residues 58 to 67 (APIPTPPPPP). Basic residues predominate over residues 138 to 148 (GRRRRPRRPKR). The AB hydrolase-1 domain maps to 169-271 (VLFFIHGVGG…HKVIMINGGG (103 aa)). Residues Ser244, Asp362, and His390 each act as charge relay system in the active site. The segment at 415–439 (EAEPKLEPKPKPQLLQPEPAPGEEK) is disordered.

It belongs to the AB hydrolase superfamily. As to quaternary structure, interacts with NLRP3 (via NACHT and LLR domains); this interaction is enhanced in the presence of NLRP3 inflammasome inducers, such as ATP, nigericin, silica, or alum. Interacts with ZDHHC12.

It is found in the cytoplasm. Its function is as follows. Negatively regulates NLRP3-driven inflammation. Promotes NLRP3 degradation through the chaperone-mediated autophagy (CMA) pathway, hence attenuating inflammasome activation and IL1B secretion. Acts by recruiting palmitoyltransferase ZDHHC12 to NLRP3, facilitating NLRP3 palmitoylation and subsequent degradation. The protein is Protein ABHD8 of Mus musculus (Mouse).